A 309-amino-acid chain; its full sequence is D-alanine--D-alanine ligase (309 aa).

The region spanning 99–304 is the ATP-grasp domain; that stretch reads KRVLLQAGIP…FPDLVQKIVD (206 aa). ATP is bound at residue 132 to 187; the sequence is LKELGLPVVIKAPTQGSTIGTFIVREEGELEPAIAGALKYDLSFMAEAYLAGPEIT. The Mg(2+) site is built by Asp-258, Glu-271, and Asn-273.

The protein belongs to the D-alanine--D-alanine ligase family. Mg(2+) is required as a cofactor. It depends on Mn(2+) as a cofactor.

It is found in the cytoplasm. It catalyses the reaction 2 D-alanine + ATP = D-alanyl-D-alanine + ADP + phosphate + H(+). It functions in the pathway cell wall biogenesis; peptidoglycan biosynthesis. Cell wall formation. In Moorella thermoacetica (strain ATCC 39073 / JCM 9320), this protein is D-alanine--D-alanine ligase.